An 83-amino-acid polypeptide reads, in one-letter code: NAD(P)H-quinone oxidoreductase subunit L, organellar chromatophore (83 aa).

Helical transmembrane passes span 17–37 and 53–73; these read LLLA…LALY and LFVY…SPFL.

Belongs to the complex I NdhL subunit family. NDH-1 can be composed of about 15 different subunits; different subcomplexes with different compositions have been identified which probably have different functions.

It is found in the plastid. The protein resides in the organellar chromatophore thylakoid membrane. It catalyses the reaction a plastoquinone + NADH + (n+1) H(+)(in) = a plastoquinol + NAD(+) + n H(+)(out). It carries out the reaction a plastoquinone + NADPH + (n+1) H(+)(in) = a plastoquinol + NADP(+) + n H(+)(out). In terms of biological role, NDH-1 shuttles electrons from an unknown electron donor, via FMN and iron-sulfur (Fe-S) centers, to quinones in the respiratory and/or the photosynthetic chain. The immediate electron acceptor for the enzyme in this species is believed to be plastoquinone. Couples the redox reaction to proton translocation, and thus conserves the redox energy in a proton gradient. This is NAD(P)H-quinone oxidoreductase subunit L, organellar chromatophore from Paulinella chromatophora.